A 250-amino-acid polypeptide reads, in one-letter code: MLGEVSKILAKSSMAIAFTGAGISAESGIPTFRGKDGLWRKYRAEELATPEAFKRDPKLVWEFYKWRIKKILEAKPNPAHIALAELEKMGIIKAVITQNVDDLHREAGSKNVIELHGNIFRVKCTSCSYREYLKESDRIGWLLSQELPRCPKCGSLLRPDVVWFGEALPEKELTTAFSLAKKADVVLVVGTSGVVYPAAYIPYIVKESGGIVVEINIEPSAITPIADFFLRGKAGEVLPKLVEEIRRISK.

One can recognise a Deacetylase sirtuin-type domain in the interval 1 to 248 (MLGEVSKILA…PKLVEEIRRI (248 aa)). 20 to 39 (GAGISAESGIPTFRGKDGLW) serves as a coordination point for NAD(+). Substrate contacts are provided by Tyr-64 and Arg-67. 98–101 (QNVD) contacts NAD(+). His-116 functions as the Proton acceptor in the catalytic mechanism. The Zn(2+) site is built by Cys-124, Cys-127, Cys-150, and Cys-153. Residues 190-192 (GTS), 216-218 (NIE), and Ala-234 each bind NAD(+).

It belongs to the sirtuin family. Class III subfamily. The cofactor is Zn(2+).

Its subcellular location is the cytoplasm. It carries out the reaction N(6)-acetyl-L-lysyl-[protein] + NAD(+) + H2O = 2''-O-acetyl-ADP-D-ribose + nicotinamide + L-lysyl-[protein]. It catalyses the reaction N(6)-succinyl-L-lysyl-[protein] + NAD(+) + H2O = 2''-O-succinyl-ADP-D-ribose + nicotinamide + L-lysyl-[protein]. Functionally, NAD-dependent lysine deacetylase and desuccinylase that specifically removes acetyl and succinyl groups on target proteins. Modulates the activities of several proteins which are inactive in their acylated form. Deacetylates the N-terminal lysine residue of Alba, the major archaeal chromatin protein and that, in turn, increases Alba's DNA binding affinity, thereby repressing transcription. This Pyrococcus furiosus (strain ATCC 43587 / DSM 3638 / JCM 8422 / Vc1) protein is NAD-dependent protein deacylase.